The chain runs to 197 residues: Protein Hikeshi (197 aa).

The required for F-X-F-G repeats-nucleoporins recognition and nuclear import stretch occupies residues 18–55 (VAEDKFVFDLPDYENINHVVVFMLGTVPFPEGMGGSVY). Positions 124-134 (QTPVGNAAVSS) are flexible linker region involved in nuclear import of HSP70 proteins.

The protein belongs to the OPI10 family. As to quaternary structure, forms an asymmetric homodimer; required for binding and nuclear import of HSP70 proteins. Interacts with ATP-bound HSP70 proteins. Interacts with NUP62 and NUP153 (via F-X-F-G repeats). Interacts with HSPA8.

The protein resides in the cytoplasm. The protein localises to the cytosol. It localises to the nucleus. Functionally, acts as a specific nuclear import carrier for HSP70 proteins following heat-shock stress: acts by mediating the nucleoporin-dependent translocation of ATP-bound HSP70 proteins into the nucleus. HSP70 proteins import is required to protect cells from heat shock damages. Does not translocate ADP-bound HSP70 proteins into the nucleus. The sequence is that of Protein Hikeshi from Bos taurus (Bovine).